Reading from the N-terminus, the 858-residue chain is Heat shock protein 105 kDa (858 aa).

Serine 2 is modified (N-acetylserine). N6-acetyllysine is present on lysine 471. Disordered stretches follow at residues 500–585 and 801–858; these read KVPT…PPEA and VNQP…MDLD. A compositionally biased stretch (acidic residues) spans 504 to 515; sequence EEDDGSSVEADM. Serine 509 and serine 510 each carry phosphoserine. Over residues 533–549 the composition is skewed to polar residues; that stretch reads QQDNSEAGTQPQVQTDG. The residue at position 558 (serine 558) is a Phosphoserine. 2 stretches are compositionally biased toward basic and acidic residues: residues 564–585 and 806–815; these read EENK…PPEA and PKIESPKLER. Residue serine 810 is modified to Phosphoserine. Residue threonine 816 is modified to Phosphothreonine. The span at 822-834 shows a compositional bias: basic and acidic residues; the sequence is LDKKEDLEGKDNF.

This sequence belongs to the heat shock protein 70 family. In terms of assembly, interacts with HSPA8/HSC70. Interacts with HSPA1A (via NBD) and HSPA1B (via NBD). Phosphorylation on Ser-509 may be important for regulation of the HSPA8/HSC70 chaperone activity. Predominantly expressed in the brain and also found in the liver.

The protein localises to the cytoplasm. In terms of biological role, acts as a nucleotide-exchange factor (NEF) for chaperone proteins HSPA1A and HSPA1B, promoting the release of ADP from HSPA1A/B thereby triggering substrate release. Prevents the aggregation of denatured proteins in cells under severe stress, on which the ATP levels decrease markedly. Inhibits HSPA8/HSC70 ATPase and chaperone activities. The chain is Heat shock protein 105 kDa (HSPH1) from Cricetulus griseus (Chinese hamster).